We begin with the raw amino-acid sequence, 167 residues long: Transcriptional regulator MraZ (167 aa).

2 consecutive SpoVT-AbrB domains span residues 8–51 and 92–135; these read ESHH…YGDH and SLPT…KPET.

This sequence belongs to the MraZ family. In terms of assembly, forms oligomers.

The protein resides in the cytoplasm. It localises to the nucleoid. This Ruegeria sp. (strain TM1040) (Silicibacter sp.) protein is Transcriptional regulator MraZ.